The primary structure comprises 1155 residues: ATP-dependent helicase/deoxyribonuclease subunit B (1155 aa).

Positions 1–300 constitute a UvrD-like helicase ATP-binding domain; sequence MSLRFIVGRA…AHLEKYYFRH (300 aa). Position 8–15 (8–15) interacts with ATP; sequence GRAGSGKS. Residues 280 to 590 enclose the UvrD-like helicase C-terminal domain; sequence TPVRFQKDSA…VVGTLERSRN (311 aa). [4Fe-4S] cluster contacts are provided by cysteine 792, cysteine 1111, cysteine 1114, and cysteine 1120.

The protein belongs to the helicase family. AddB/RexB type 1 subfamily. Heterodimer of AddA and AddB. Mg(2+) is required as a cofactor. The cofactor is [4Fe-4S] cluster.

Functionally, the heterodimer acts as both an ATP-dependent DNA helicase and an ATP-dependent, dual-direction single-stranded exonuclease. Recognizes the chi site generating a DNA molecule suitable for the initiation of homologous recombination. The AddB subunit has 5' -&gt; 3' nuclease activity but not helicase activity. This chain is ATP-dependent helicase/deoxyribonuclease subunit B, found in Desulforamulus reducens (strain ATCC BAA-1160 / DSM 100696 / MI-1) (Desulfotomaculum reducens).